A 176-amino-acid chain; its full sequence is R-phycoerythrin beta chain (176 aa).

Phycourobilin-binding residues include cysteine 50 and cysteine 61. Position 72 is an N4-methylasparagine (asparagine 72). (2R,3E)-phycoerythrobilin-binding residues include cysteine 82 and cysteine 158.

Belongs to the phycobiliprotein family. As to quaternary structure, heterodimer of an alpha and a beta chain. In terms of processing, contains two covalently linked phycoerythrobilin chromophores and one covalently linked phycourobilin chromophore.

It is found in the plastid. The protein localises to the chloroplast thylakoid membrane. Light-harvesting photosynthetic bile pigment-protein from the phycobiliprotein complex. The sequence is that of R-phycoerythrin beta chain (cpeB) from Aglaothamnion neglectum (Red alga).